The primary structure comprises 798 residues: Cold shock domain-containing protein E1 (798 aa).

The CSD 1 domain maps to 26–87 (ETGVIEKLLT…RTGKPIAIKL (62 aa)). Lys-81 carries the post-translational modification N6-acetyllysine. Lys-91 is covalently cross-linked (Glycyl lysine isopeptide (Lys-Gly) (interchain with G-Cter in SUMO2)). Residue Ser-123 is modified to Phosphoserine. Residues 136–179 (VFYLTYTSEDVEGNVQLETGDKINFVIDNNKHTGAVSARNIMLL) form the CSD 2; truncated domain. Residues 186–245 (CQGVVCAMKEAFGFIERGDVVKEIFFHYSEFKGDLETLQPGDDVEFTIKDRNGKEVATDV) form the CSD 3 domain. Residue Ser-276 is modified to Phosphoserine. The 41-residue stretch at 297–337 (LPFGDKDTKSKVTLLEGDHVRFNISTDRRDKLERATNIEVL) folds into the CSD 4; truncated domain. CSD domains are found at residues 349–410 (EMGV…AIRI) and 447–507 (NKGK…ATCV). Residue Ser-514 is modified to Phosphoserine. The CSD 7 domain occupies 519–579 (LLGYVATLKD…KGNKVSAEKV (61 aa)). Residue Ser-584 is modified to Phosphoserine. 2 consecutive CSD domains span residues 610-670 (PTQI…AYNI) and 674-735 (RRAT…ACNV). Residues 748–789 (PRPDRLVNRLKNITLDDASAPRLMVLRQPRGPDNSMGFGAER) enclose the SUZ-C domain. Thr-761 bears the Phosphothreonine mark.

Belongs to the UNR family. Component of a multi subunit autoregulatory ribonucleoprotein complex (ARC), at least composed of IGF2BP1, PABPC1 and CSDE1. Interacts with STRAP. Part of a complex associated with the FOS mCRD domain and consisting of PABPC1, PAIP1, HNRPD and SYNCRIP. The interaction with PABPC1 is direct and RNA-independent. Interacts with EIF4ENIF1/4E-T.

The protein localises to the cytoplasm. The protein resides in the stress granule. It is found in the P-body. Its function is as follows. RNA-binding protein involved in translationally coupled mRNA turnover. Implicated with other RNA-binding proteins in the cytoplasmic deadenylation/translational and decay interplay of the FOS mRNA mediated by the major coding-region determinant of instability (mCRD) domain. Required for efficient formation of stress granules. In Mus musculus (Mouse), this protein is Cold shock domain-containing protein E1.